We begin with the raw amino-acid sequence, 637 residues long: Galactofuranosyltransferase GlfT2 (637 aa).

Positions 171, 200, 229, and 256 each coordinate UDP-alpha-D-galactofuranose. Mn(2+) is bound by residues Asp256 and Asp258. Asp372 (proton acceptor) is an active-site residue. A Mn(2+)-binding site is contributed by His396.

It belongs to the glycosyltransferase 2 family. As to quaternary structure, homotetramer. Mn(2+) serves as cofactor. It depends on Mg(2+) as a cofactor.

It localises to the cell membrane. The enzyme catalyses beta-D-galactofuranosyl-(1-&gt;5)-beta-D-galactofuranosyl-(1-&gt;4)-alpha-L-rhamnosyl-(1-&gt;3)-N-acetyl-alpha-D-glucosaminyl-diphospho-trans,octa-cis-decaprenol + 28 UDP-alpha-D-galactofuranose = [beta-D-galactofuranosyl-(1-&gt;5)-beta-D-galactofuranosyl-(1-&gt;6)]14-beta-D-galactofuranosyl-(1-&gt;5)-beta-D-galactofuranosyl-(1-&gt;4)-alpha-L-rhamnopyranosyl-(1-&gt;3)-N-acetyl-alpha-D-glucosaminyl-diphospho-trans,octa-cis-decaprenol + 28 UDP + 28 H(+). It functions in the pathway cell wall biogenesis; cell wall polysaccharide biosynthesis. In terms of biological role, involved in the galactan polymerization of the arabinogalactan (AG) region of the mycolylarabinogalactan-peptidoglycan (mAGP) complex, an essential component of the mycobacteria cell wall. Thus, successively transfers approximately 28 galactofuranosyl (Galf) residues from UDP-galactofuranose (UDP-Galf) onto the galactofuranosyl-galactofuranosyl-rhamnosyl-GlcNAc-diphospho-decaprenol (Galf-Galf-Rha-GlcNAc-PP-C50) acceptor produced by GlfT1, with alternating 1-&gt;5 and 1-&gt;6 links, forming a galactan domain with approximately 30 galactofuranosyl residues. In Mycobacterium tuberculosis (strain ATCC 25618 / H37Rv), this protein is Galactofuranosyltransferase GlfT2.